Consider the following 507-residue polypeptide: Histidine ammonia-lyase (507 aa).

The 5-imidazolinone (Ala-Gly) cross-link spans 141–143 (ASG). The residue at position 142 (Ser-142) is a 2,3-didehydroalanine (Ser).

The protein belongs to the PAL/histidase family. Contains an active site 4-methylidene-imidazol-5-one (MIO), which is formed autocatalytically by cyclization and dehydration of residues Ala-Ser-Gly.

The protein resides in the cytoplasm. It carries out the reaction L-histidine = trans-urocanate + NH4(+). It functions in the pathway amino-acid degradation; L-histidine degradation into L-glutamate; N-formimidoyl-L-glutamate from L-histidine: step 1/3. The chain is Histidine ammonia-lyase from Burkholderia mallei (strain NCTC 10247).